The chain runs to 81 residues: Photosystem I iron-sulfur center (81 aa).

2 consecutive 4Fe-4S ferredoxin-type domains span residues 2–31 (SHTVKIYDTCIGCTQCVRACPTDVLEMVPW) and 39–68 (VASSPRTEDCVGCKRCETACPTDFLSIRVY). [4Fe-4S] cluster is bound by residues cysteine 11, cysteine 14, cysteine 17, cysteine 21, cysteine 48, cysteine 51, cysteine 54, and cysteine 58.

As to quaternary structure, the cyanobacterial PSI reaction center is composed of one copy each of PsaA,B,C,D,E,F,I,J,K,L,M and X, and forms trimeric complexes. The cofactor is [4Fe-4S] cluster.

Its subcellular location is the cellular thylakoid membrane. It catalyses the reaction reduced [plastocyanin] + hnu + oxidized [2Fe-2S]-[ferredoxin] = oxidized [plastocyanin] + reduced [2Fe-2S]-[ferredoxin]. Functionally, apoprotein for the two 4Fe-4S centers FA and FB of photosystem I (PSI); essential for photochemical activity. FB is the terminal electron acceptor of PSI, donating electrons to ferredoxin. The C-terminus interacts with PsaA/B/D and helps assemble the protein into the PSI complex. Required for binding of PsaD and PsaE to PSI. PSI is a plastocyanin/cytochrome c6-ferredoxin oxidoreductase, converting photonic excitation into a charge separation, which transfers an electron from the donor P700 chlorophyll pair to the spectroscopically characterized acceptors A0, A1, FX, FA and FB in turn. The protein is Photosystem I iron-sulfur center of Trichormus variabilis (strain ATCC 29413 / PCC 7937) (Anabaena variabilis).